The primary structure comprises 157 residues: Monooxygenase CPUR_05417 (157 aa).

Belongs to the avfA family.

The protein operates within secondary metabolite biosynthesis. Monooxygenase; part of the ergochrome gene cluster responsible for the typical purple-black color of the ergot sclerotia. The ergochrome gene cluster produces several ergot pigments including the yellow ergochrome secalonic acid and its derivatives, as well as the red anthraquinones endocrocin and clavorubin. The pathway begins with the synthesis of atrochrysone thioester by the polyketide synthase (PKS) CPUR_05437. The atrochrysone carboxyl ACP thioesterase CPUR_05436 then breaks the thioester bond and releases the atrochrysone carboxylic acid from CPUR_05437. The atrochrysone carboxylic acid is then converted to atrochrysone which is further transformed into emodin anthrone. The next step is performed by the anthrone oxygenase CPUR_05434 that catalyzes the oxidation of emodinanthrone to emodin. Emodin is further modified to yield monodictyphenone via several steps involving CPUR_05427, CPUR_05428, CPUR_05429 and CPUR_05430. The short chain dehydrogenase/reductase CPUR_05418 then catalyzes the C-5 ketoreduction to give the xanthone skeleton of the monomeric units. Ergochromes formation requires further dimerization steps of different xanthone units, probably catalyzed by the cytochrome P450 monooxygenase CPUR_05419. CPUR_05425, CPUR_05426 and CPUR_05431 are unique to Claviceps, thus it is likely that they are involved in further modification of xanthone units or in their dimerization. The yellow ergochromes and the red anthraquinone pigments endocrocin and clavorubin are products from the same PKS derived precursors and the latter are likely shunt products in the pathway of xanthone biosynthesis. It is proposed that atrochrysone carboxylic acid released from the PKS CPUR_05437 can also be converted to endocrocin anthrone which is further oxidized into endocrocin by CPUR_05435. Endocrocin could be then modified to clavorubin, possibly by CPUR_05423 and CPUR_05431. Clavorubin is the principal anthraquinone metabolite produced by the cluster with a much higher yield compared to endocrocin. This is Monooxygenase CPUR_05417 from Claviceps purpurea (strain 20.1) (Ergot fungus).